A 361-amino-acid chain; its full sequence is Phospho-N-acetylmuramoyl-pentapeptide-transferase (361 aa).

The next 10 helical transmembrane spans lie at 26-46, 73-93, 98-118, 139-159, 168-188, 200-220, 237-257, 264-284, 289-309, and 339-359; these read SILA…VLIQ, TMGG…WGDL, VWLV…DDWI, IFGL…AAVT, IALP…IVGF, GLAI…AYAS, AGDL…FLWF, VFMG…IAVI, LVLV…IIQV, and VIVR…ATLK.

It belongs to the glycosyltransferase 4 family. MraY subfamily. Mg(2+) is required as a cofactor.

Its subcellular location is the cell inner membrane. It catalyses the reaction UDP-N-acetyl-alpha-D-muramoyl-L-alanyl-gamma-D-glutamyl-meso-2,6-diaminopimeloyl-D-alanyl-D-alanine + di-trans,octa-cis-undecaprenyl phosphate = di-trans,octa-cis-undecaprenyl diphospho-N-acetyl-alpha-D-muramoyl-L-alanyl-D-glutamyl-meso-2,6-diaminopimeloyl-D-alanyl-D-alanine + UMP. It participates in cell wall biogenesis; peptidoglycan biosynthesis. In terms of biological role, catalyzes the initial step of the lipid cycle reactions in the biosynthesis of the cell wall peptidoglycan: transfers peptidoglycan precursor phospho-MurNAc-pentapeptide from UDP-MurNAc-pentapeptide onto the lipid carrier undecaprenyl phosphate, yielding undecaprenyl-pyrophosphoryl-MurNAc-pentapeptide, known as lipid I. This chain is Phospho-N-acetylmuramoyl-pentapeptide-transferase, found in Xylella fastidiosa (strain 9a5c).